Consider the following 148-residue polypeptide: Large ribosomal subunit protein bL9 (148 aa).

The protein belongs to the bacterial ribosomal protein bL9 family.

In terms of biological role, binds to the 23S rRNA. The polypeptide is Large ribosomal subunit protein bL9 (Bacillus cytotoxicus (strain DSM 22905 / CIP 110041 / 391-98 / NVH 391-98)).